We begin with the raw amino-acid sequence, 415 residues long: MQYKKPLVVSALAATSLAAYAPKDPWSTLTPSATYKGGITDYSSSFGIAIEAVATSASSVASSKAKRAASQIGDGQVQAATTTAAVSKKSTAAAVSQITDGQVQAAKSTAAAASQISDGQVQAAKSTAAAVSQITDGQVQAAKSTAAAVSQITDGQVQAAKSTAAAVSQITDGQVQAAKSTAAAVSQITDGQVQAAKSTAAAASQISDGQVQAAKSTAAAASQISDGQVQAAKSTAAAASQISDGQVQAAKSTAAAASQISDGQVQATTSTKAAASQITDGQIQASKTTSGASQVSDGQVQATAEVKDANDPVDVVSCNNNSTLSMSLSKGILTDRKGRIGSIVANRQFQFDGPPPQAGAIYAAGWSITPEGNLALGDQDTFYQCLSGDFYNLYDKHIGSQCHEVYLQAIDLIDC.

The N-terminal stretch at 1 to 18 (MQYKKPLVVSALAATSLA) is a signal peptide. The propeptide occupies 19–67 (AYAPKDPWSTLTPSATYKGGITDYSSSFGIAIEAVATSASSVASSKAKR). 13 PIR1/2/3 repeats span residues 66–84 (KRAA…TTTA), 92–109 (AAAV…AKST), 110–127 (AAAA…AKST), 128–145 (AAAV…AKST), 146–163 (AAAV…AKST), 164–181 (AAAV…AKST), 182–199 (AAAV…AKST), 200–217 (AAAA…AKST), 218–235 (AAAA…AKST), 236–253 (AAAA…AKST), 254–271 (AAAA…TTST), 272–288 (KAAA…ASKT), and 289–307 (TSGA…AEVK).

This sequence belongs to the PIR protein family. Covalently linked to beta-1,3-glucan of the inner cell wall layer via an alkali-sensitive ester linkage between the gamma-carboxyl group of glutamic acids, arising from specific glutamines within the PIR1/2/3 repeats, and hydroxyl groups of glucoses of beta-1,3-glucan chains. Post-translationally, O-glycosylated. Extensively O-mannosylated.

The protein localises to the secreted. Its subcellular location is the cell wall. Component of the outer cell wall layer. Required for stability of the cell wall and for optimal growth. Required for resistance against several antifungal and cell wall-perturbing agents. The protein is Cell wall mannoprotein PIR3 (PIR3) of Saccharomyces cerevisiae (strain YJM789) (Baker's yeast).